A 315-amino-acid chain; its full sequence is Solute carrier family 25 member 32 (315 aa).

Solcar repeat units lie at residues His20–Tyr109, Leu118–Lys209, and Leu222–Phe306. Transmembrane regions (helical) follow at residues Leu26 to Leu43, Ile89 to Ile106, Tyr123 to Val143, Phe186 to Tyr203, Tyr227 to Tyr243, and Gly281 to Tyr300.

It belongs to the mitochondrial carrier (TC 2.A.29) family. Ubiquitous.

It is found in the mitochondrion inner membrane. The enzyme catalyses FAD(in) = FAD(out). Functionally, facilitates flavin adenine dinucleotide (FAD) translocation across the mitochondrial inner membrane into the mitochondrial matrix where it acts as a redox cofactor to assist flavoenzyme activities in fundamental metabolic processes including fatty acid beta-oxidation, amino acid and choline metabolism as well as mitochondrial electron transportation. In particular, provides FAD to DLD dehydrogenase of the glycine cleavage system, part of mitochondrial one-carbon metabolic pathway involved in neural tube closure in early embryogenesis. The polypeptide is Solute carrier family 25 member 32 (Homo sapiens (Human)).